The primary structure comprises 108 residues: UPF0060 membrane protein YnfA (108 aa).

Residues 1-5 (MIKTT) are Periplasmic-facing. The chain crosses the membrane as a helical span at residues 6–26 (LLFFATALCEIIGCFLPWLWL). Residues 27–30 (KRNA) lie on the Cytoplasmic side of the membrane. A helical membrane pass occupies residues 31–51 (SIWLLLPAGISLALFVWLLTL). At 52 to 60 (HPAASGRVY) the chain is on the periplasmic side. A helical membrane pass occupies residues 61–81 (AAYGGVYVCTALIWLRVVDGV). Topologically, residues 82 to 84 (KLS) are cytoplasmic. The helical transmembrane segment at 85–105 (LYDWTGALIALCGMLIIVAGW) threads the bilayer. Topologically, residues 106 to 108 (GRT) are periplasmic.

Belongs to the UPF0060 family.

The protein localises to the cell inner membrane. The chain is UPF0060 membrane protein YnfA from Escherichia coli (strain SMS-3-5 / SECEC).